Reading from the N-terminus, the 42-residue chain is uncharacterized protein (42 aa).

It localises to the plastid. Its subcellular location is the chloroplast. This is an uncharacterized protein from Diacronema lutheri (Unicellular marine alga).